The primary structure comprises 287 residues: Uroplakin-3a (287 aa).

A signal peptide spans 1–18 (MLLLWALLALGCLRCGWT). At 19–207 (VNLQPQLASV…DTWPGRRSGG (189 aa)) the chain is on the lumenal side. Asn74, Asn139, and Asn170 each carry an N-linked (GlcNAc...) asparagine glycan. The chain crosses the membrane as a helical span at residues 208-235 (MIVITSILGSLPFFLLVGFAGAIILSFV). Topologically, residues 236–287 (DMGSSDGEMTHDSQITQEAVPKTLGTSEPSYSSVNRGPPLDRAEVFSSKLQD) are cytoplasmic. The interval 243–287 (EMTHDSQITQEAVPKTLGTSEPSYSSVNRGPPLDRAEVFSSKLQD) is disordered. Residues 259–270 (LGTSEPSYSSVN) are compositionally biased toward polar residues.

This sequence belongs to the uroplakin-3 family. Heterodimer with uroplakin-1B (UPK1B).

The protein localises to the endoplasmic reticulum membrane. Functionally, component of the asymmetric unit membrane (AUM); a highly specialized biomembrane elaborated by terminally differentiated urothelial cells. May play an important role in AUM-cytoskeleton interaction in terminally differentiated urothelial cells. It also contributes to the formation of urothelial glycocalyx which may play an important role in preventing bacterial adherence. This Mus musculus (Mouse) protein is Uroplakin-3a (Upk3a).